A 1304-amino-acid chain; its full sequence is Zinc finger CCCH domain-containing protein 4 (1304 aa).

The span at 1-33 shows a compositional bias: pro residues; it reads MEAVPGTPPPPPSESPPPPSPPPPSTPSPPPCS. Residues 1–387 are disordered; it reads MEAVPGTPPP…SDHDKPHQQS (387 aa). Residues 53-73 are compositionally biased toward acidic residues; the sequence is DREDGELEEGELEDDGAEEVQ. Residues 80–99 show a composition bias toward basic and acidic residues; it reads ERSRKEKGEKHHSDSEEEKS. A phosphoserine mark is found at Ser-92 and Ser-94. Residues 94-128 are a coiled coil; it reads SEEEKSHRRLKRKRKKEREKEKRRSKKRRKSKHKR. Residues 100-130 show a composition bias toward basic residues; it reads HRRLKRKRKKEREKEKRRSKKRRKSKHKRHA. Over residues 135-144 the composition is skewed to acidic residues; that stretch reads DFSDFSDDSD. Residue Tyr-155 is modified to Phosphotyrosine. The segment covering 165–174 has biased composition (polar residues); sequence SHQQYSSSHN. A compositionally biased stretch (acidic residues) spans 194-218; the sequence is EDYENEQYGEYEGDEEEDMGKEDYD. Positions 219–235 are enriched in basic and acidic residues; it reads DFTKELNQYRRAKEGSS. The segment covering 238-251 has biased composition (basic residues); that stretch reads RGSRGRGRGYRGRG. Positions 252 to 264 are enriched in gly residues; it reads SRGGSRGRGMGRG. Residues 277-303 are compositionally biased toward acidic residues; sequence PEDEEDLYEEEIEYGESEEPMGDDDYD. Residues 304–320 show a composition bias toward basic and acidic residues; sequence DYSKELNQYRRSKDSRG. A compositionally biased stretch (basic residues) spans 322 to 346; it reads GLSRGRGRGSRGGRGKGMGRGRGRG. The span at 357–368 shows a compositional bias: acidic residues; that stretch reads NDDEDFYDDDMG. Basic and acidic residues predominate over residues 376–387; the sequence is RRSDHDKPHQQS. C3H1-type zinc fingers lie at residues 389–416, 418–445, and 446–469; these read KKGKVICKYFVEGRCTWGDHCNFSHDIE, PKKRELCKFYITGFCARAENCPYMHGDF, and PCKLYHTTGNCINGDDCMFSHDPL. Residues 485-495 are compositionally biased toward acidic residues; the sequence is AEAGAEDEKEV. A disordered region spans residues 485–567; that stretch reads AEAGAEDEKE…LPTHEPLSPQ (83 aa). Pro residues-rich tracts occupy residues 506 to 529 and 538 to 556; these read LPKPPPGVGLLPTPPRPPGPPAPT and GGPPPPPPPPPPPPGPPQM. Arg-599 is modified (asymmetric dimethylarginine). Disordered regions lie at residues 601 to 691, 719 to 970, and 994 to 1304; these read PGPG…DSPH, PGLV…SHIK, and LPIP…PFCQ. Positions 603–622 are enriched in pro residues; the sequence is PGGPSGPMGPGPNMGPPGPM. Residues 628–660 are compositionally biased toward basic and acidic residues; the sequence is PDMHPDMHPDMHPDMHPDMHPDMHPDMHPDMHP. Positions 669–683 are enriched in pro residues; it reads NPGPPMGPGGPPMMP. Positions 778–809 form a coiled coil; it reads ALYLRIQQKQQEEERARRLAESSKQDRENEEG. A compositionally biased stretch (basic and acidic residues) spans 787–804; that stretch reads QQEEERARRLAESSKQDR. Ser-816 and Ser-817 each carry phosphoserine. Positions 824-852 are enriched in polar residues; it reads SSVTSILKTLRQQTSSRPQASVGEPSSSG. The segment covering 869–884 has biased composition (basic and acidic residues); sequence SDPRLSRDPRLSRHAE. Phosphoserine is present on residues Ser-913, Ser-916, and Ser-917. The segment covering 913 to 929 has biased composition (low complexity); it reads SLHSSPAGPSSSKGQPP. The segment covering 994-1005 has biased composition (pro residues); sequence LPIPKQDVPPVP. 2 stretches are compositionally biased toward polar residues: residues 1028 to 1044 and 1058 to 1067; these read NTRQRPGSTDPSTSGSN and VNVNTPGQSE. Basic and acidic residues predominate over residues 1068-1085; the sequence is KPSDPRVRKTPTDPRLQK. 2 stretches are compositionally biased toward low complexity: residues 1098–1129 and 1137–1146; these read PCPTEASPPAASPSGDSSPPATAPYDPRVLAA and SSGQSSVLSG. Ser-1104, Ser-1109, Ser-1111, and Ser-1115 each carry phosphoserine. Thr-1119 is subject to Phosphothreonine. Polar residues predominate over residues 1204 to 1220; the sequence is KASTDGATATDRYNSYN. Over residues 1225-1235 the composition is skewed to low complexity; sequence KATAAPTAASS. Phosphoserine is present on residues Ser-1270 and Ser-1276.

It belongs to the suppressor of sable family. In terms of assembly, interacts with WDR82.

The protein localises to the chromosome. In terms of biological role, RNA-binding protein that suppresses transcription of long non-coding RNAs (lncRNAs). LncRNAs are defined as transcripts more than 200 nucleotides that are not translated into protein. Together with WDR82, part of a transcription termination checkpoint that promotes transcription termination of lncRNAs and their subsequent degradation by the exosome. The transcription termination checkpoint is activated by the inefficiently spliced first exon of lncRNAs. This is Zinc finger CCCH domain-containing protein 4 from Mus musculus (Mouse).